Consider the following 411-residue polypeptide: Citrate synthase (411 aa).

Residues His-304 and Asp-363 contribute to the active site.

This sequence belongs to the citrate synthase family.

It carries out the reaction oxaloacetate + acetyl-CoA + H2O = citrate + CoA + H(+). Its pathway is carbohydrate metabolism; tricarboxylic acid cycle; isocitrate from oxaloacetate: step 1/2. The protein is Citrate synthase (gltA) of Rickettsia parkeri.